The following is a 333-amino-acid chain: Tetraacyldisaccharide 4'-kinase (333 aa).

60–67 lines the ATP pocket; sequence TVGGTGKT.

Belongs to the LpxK family.

The catalysed reaction is a lipid A disaccharide + ATP = a lipid IVA + ADP + H(+). It participates in glycolipid biosynthesis; lipid IV(A) biosynthesis; lipid IV(A) from (3R)-3-hydroxytetradecanoyl-[acyl-carrier-protein] and UDP-N-acetyl-alpha-D-glucosamine: step 6/6. Its function is as follows. Transfers the gamma-phosphate of ATP to the 4'-position of a tetraacyldisaccharide 1-phosphate intermediate (termed DS-1-P) to form tetraacyldisaccharide 1,4'-bis-phosphate (lipid IVA). The sequence is that of Tetraacyldisaccharide 4'-kinase from Ectopseudomonas mendocina (strain ymp) (Pseudomonas mendocina).